A 361-amino-acid chain; its full sequence is Actin maturation protease (361 aa).

Residues 1–75 (MTSPCSFPLK…PPPPPLPSAV (75 aa)) form a disordered region. Composition is skewed to pro residues over residues 24-33 (NIPPPLPLNP) and 52-72 (PLPPPPPPPAPPPPPPPPPLP). The segment at 134-254 (SCIQEGPQCG…WAVSAGVLIG (121 aa)) is peptidase C39-like. Cys142 is an active-site residue.

This sequence belongs to the ACTMAP family. Interacts (via N-terminus) with PFN2 isoforms 1/IIa and 2/IIb; the interactions may facilitate efficient cleavage of the acetylated N-terminus of immature actin. Interacts with PFN1.

Its subcellular location is the cytoplasm. The enzyme catalyses N-terminal N(alpha)-acetyl-L-methionyl-L-aspartyl-[protein] + H2O = N-terminal L-aspartyl-[protein] + N-acetyl-L-methionine. It carries out the reaction N-terminal N(alpha)-acetyl-L-methionyl-L-glutamyl-[protein] + H2O = N-terminal L-glutamyl-[protein] + N-acetyl-L-methionine. The catalysed reaction is N-terminal N(alpha)-acetyl-L-cysteinyl-L-aspartyl-[protein] + H2O = N-terminal L-aspartyl-[protein] + N-acetyl-L-cysteine. It catalyses the reaction N-terminal N(alpha)-acetyl-L-cysteinyl-L-glutamyl-[protein] + H2O = N-terminal L-glutamyl-[protein] + N-acetyl-L-cysteine. Actin maturation protease that specifically mediates the cleavage of immature acetylated N-terminal actin, thereby contributing to actin maturation. Cleaves N-terminal acetylated methionine of immature cytoplasmic beta- and gamma-actins Actb and Actg1 after translation. Cleaves N-terminal acetylated cysteine of muscle alpha-actins Acta1, Actc1 and Acta2 after canonical removal of N-terminal methionine. This is Actin maturation protease from Mus musculus (Mouse).